The sequence spans 145 residues: UPF0310 protein Mvan_0064 (145 aa).

Belongs to the UPF0310 family.

In Mycolicibacterium vanbaalenii (strain DSM 7251 / JCM 13017 / BCRC 16820 / KCTC 9966 / NRRL B-24157 / PYR-1) (Mycobacterium vanbaalenii), this protein is UPF0310 protein Mvan_0064.